We begin with the raw amino-acid sequence, 151 residues long: MD-2-related lipid-recognition protein (151 aa).

Residues 1-18 (MAALHWLLLAALLGCTLA) form the signal peptide. 3 disulfide bridges follow: C27–C141, C45–C51, and C95–C100. A glycan (N-linked (GlcNAc...) asparagine) is linked at N58.

In terms of processing, N-glycosylated. In terms of tissue distribution, hemolymph (at protein level). Constitutively expressed mainly in fat body and also in hemocytes and secreted into hemolymph. Not detected in midgut, epidermis, or Malpighian tubule of naive larvae.

The protein resides in the secreted. Binds to lipopolysaccharide from a variety of Gram-negative bacteria and to lipid A. The protein is MD-2-related lipid-recognition protein of Manduca sexta (Tobacco hawkmoth).